The following is a 601-amino-acid chain: Aspartate--tRNA ligase (601 aa).

Residue E183 coordinates L-aspartate. The interval 207 to 210 (QIFK) is aspartate. R229 is a binding site for L-aspartate. ATP is bound by residues 229 to 231 (RDE) and Q238. H457 is a binding site for L-aspartate. E497 provides a ligand contact to ATP. R504 provides a ligand contact to L-aspartate. Residue 549 to 552 (GIDR) participates in ATP binding.

The protein belongs to the class-II aminoacyl-tRNA synthetase family. Type 1 subfamily. As to quaternary structure, homodimer.

It localises to the cytoplasm. The catalysed reaction is tRNA(Asp) + L-aspartate + ATP = L-aspartyl-tRNA(Asp) + AMP + diphosphate. Functionally, catalyzes the attachment of L-aspartate to tRNA(Asp) in a two-step reaction: L-aspartate is first activated by ATP to form Asp-AMP and then transferred to the acceptor end of tRNA(Asp). The sequence is that of Aspartate--tRNA ligase from Leptospira interrogans serogroup Icterohaemorrhagiae serovar copenhageni (strain Fiocruz L1-130).